The following is a 409-amino-acid chain: Menaquinone reductase (409 aa).

FAD is bound by residues 11 to 15 (GAGPA), 44 to 47 (CGDG), Arg-101, Val-125, Asp-288, and 300 to 301 (GI).

It belongs to the geranylgeranyl reductase family. FAD serves as cofactor.

It carries out the reaction menaquinone-9 + AH2 = beta-dihydromenaquinone-9 + A. It functions in the pathway quinol/quinone metabolism; menaquinone biosynthesis. Functionally, catalyzes the reduction of a single double bond in the isoprenoid tail of menaquinone (MK-9) in M.smegmatis, likely the beta-isoprene unit, forming the predominant form of menaquinone found in mycobacteria, MK-9(II-H2). The chain is Menaquinone reductase from Mycolicibacterium smegmatis (strain ATCC 700084 / mc(2)155) (Mycobacterium smegmatis).